The primary structure comprises 79 residues: Small ribosomal subunit protein bS18B (79 aa).

Belongs to the bacterial ribosomal protein bS18 family. In terms of assembly, part of the 30S ribosomal subunit. Forms a tight heterodimer with protein bS6.

In terms of biological role, binds as a heterodimer with protein bS6 to the central domain of the 16S rRNA, where it helps stabilize the platform of the 30S subunit. The sequence is that of Small ribosomal subunit protein bS18B from Saccharopolyspora erythraea (strain ATCC 11635 / DSM 40517 / JCM 4748 / NBRC 13426 / NCIMB 8594 / NRRL 2338).